The sequence spans 129 residues: Small ribosomal subunit protein uS11c (129 aa).

The protein belongs to the universal ribosomal protein uS11 family. As to quaternary structure, part of the 30S ribosomal subunit.

It localises to the plastid. Its subcellular location is the chloroplast. This chain is Small ribosomal subunit protein uS11c, found in Gracilaria tenuistipitata var. liui (Red alga).